The following is a 572-amino-acid chain: Urease subunit alpha (572 aa).

In terms of domain architecture, Urease spans 136–572 (GGIDTHIHWI…VPLAQRYFLF (437 aa)). Residues H141, H143, and K224 each contribute to the Ni(2+) site. K224 is subject to N6-carboxylysine. H226 is a substrate binding site. Positions 253 and 279 each coordinate Ni(2+). The active-site Proton donor is H327. A Ni(2+)-binding site is contributed by D367.

It belongs to the metallo-dependent hydrolases superfamily. Urease alpha subunit family. In terms of assembly, heterotrimer of UreA (gamma), UreB (beta) and UreC (alpha) subunits. Three heterotrimers associate to form the active enzyme. It depends on Ni cation as a cofactor. In terms of processing, carboxylation allows a single lysine to coordinate two nickel ions.

It is found in the cytoplasm. It catalyses the reaction urea + 2 H2O + H(+) = hydrogencarbonate + 2 NH4(+). Its pathway is nitrogen metabolism; urea degradation; CO(2) and NH(3) from urea (urease route): step 1/1. The protein is Urease subunit alpha of Actinobacillus pleuropneumoniae serotype 7 (strain AP76).